We begin with the raw amino-acid sequence, 304 residues long: Mycothiol acetyltransferase (304 aa).

Glu-36 contacts 1D-myo-inositol 2-(L-cysteinylamino)-2-deoxy-alpha-D-glucopyranoside. Residue 73–75 (LFV) coordinates acetyl-CoA. The N-acetyltransferase domain occupies 145-304 (LEIQTYTESV…EEHCVWAKSD (160 aa)). Glu-179, Lys-225, and Glu-236 together coordinate 1D-myo-inositol 2-(L-cysteinylamino)-2-deoxy-alpha-D-glucopyranoside. 240–242 (VGL) serves as a coordination point for acetyl-CoA. Tyr-274 lines the 1D-myo-inositol 2-(L-cysteinylamino)-2-deoxy-alpha-D-glucopyranoside pocket. Acetyl-CoA is bound at residue 279–284 (NDPAVK).

Belongs to the acetyltransferase family. MshD subfamily. Monomer.

It carries out the reaction 1D-myo-inositol 2-(L-cysteinylamino)-2-deoxy-alpha-D-glucopyranoside + acetyl-CoA = mycothiol + CoA + H(+). Its function is as follows. Catalyzes the transfer of acetyl from acetyl-CoA to desacetylmycothiol (Cys-GlcN-Ins) to form mycothiol. In Corynebacterium aurimucosum (strain ATCC 700975 / DSM 44827 / CIP 107346 / CN-1) (Corynebacterium nigricans), this protein is Mycothiol acetyltransferase.